Here is a 185-residue protein sequence, read N- to C-terminus: Inner membrane lipoprotein DcrB (185 aa).

The signal sequence occupies residues 1–19 (MRNLVKYVGIGLLVMGLAA). C20 carries the N-palmitoyl cysteine lipid modification. C20 is lipidated: S-diacylglycerol cysteine.

This sequence belongs to the DcrB family.

It localises to the cell membrane. In terms of biological role, plays a role in cell envelope biogenesis, maintenance of cell envelope integrity and membrane homeostasis. Essential for lipoprotein maturation under conditions where membrane fluidity may be altered. The protein is Inner membrane lipoprotein DcrB of Shigella flexneri.